A 96-amino-acid polypeptide reads, in one-letter code: Exopolysaccharide production repressor protein (96 aa).

A run of 2 helical transmembrane segments spans residues 6–26 (FVVS…FLTG) and 35–55 (TLLC…FLVW). A disordered region spans residues 64–96 (LSPGQLPADPTNDEKQTGKLSLRRLNRPPHFNS).

The protein resides in the cell membrane. The protein operates within glycan metabolism; exopolysaccharide biosynthesis. Its function is as follows. Inhibition of exopolysaccharide synthesis (EPS) and nodulation ability (NOD). The protein is Exopolysaccharide production repressor protein (exoX) of Sinorhizobium fredii (strain NBRC 101917 / NGR234).